The sequence spans 89 residues: Elongation factor 1-beta (89 aa).

This sequence belongs to the EF-1-beta/EF-1-delta family.

Promotes the exchange of GDP for GTP in EF-1-alpha/GDP, thus allowing the regeneration of EF-1-alpha/GTP that could then be used to form the ternary complex EF-1-alpha/GTP/AAtRNA. This is Elongation factor 1-beta from Methanococcus maripaludis (strain C7 / ATCC BAA-1331).